The primary structure comprises 121 residues: Protein p14.5 (121 aa).

Ala-2 carries the N-acetylalanine; by host modification. Residues 84–121 (SLVPDEADNKPEDDEESGGAKPKKKKHLFPKLSSHKSK) are disordered. Residues 104-121 (KPKKKKHLFPKLSSHKSK) show a composition bias toward basic residues.

This sequence belongs to the asfivirus structural protein p14.5 family. In terms of assembly, interacts with the major capsid protein. Interacts with host IRF3; this interaction interferes with the recruitment of IRF3 to TBK1. Post-translationally, acetylated.

It localises to the virion. Its function is as follows. Structural protein required for transport of intracellular particles from the assembly sites to the plasma membrane. Binds to both ssDNA and dsDNA. Suppressed the activation of the cGAS/STING pathway by interfering with the recruitment of IRF3 to TBK1, which in turn suppresses IRF3 phosphorylation, decreasing interferon production. This is Protein p14.5 from African swine fever virus (isolate Pig/Kenya/KEN-50/1950) (ASFV).